Reading from the N-terminus, the 634-residue chain is Nicotinic receptor-associated protein 1 (634 aa).

C2 domains are found at residues 1 to 141 (MNQP…KAHL) and 159 to 295 (KTGS…EILL). Leu29, Asp30, Asp36, Asp105, Asp107, Asp119, Asp189, Asp195, Asp251, Asp253, and Asp271 together coordinate Ca(2+). The VWFA domain occupies 338 to 557 (DFAVAVDFTA…LDPDVIQENL (220 aa)). The interval 576-603 (RGFQPRPVDDPWRRDSPPPEFDPILDGT) is disordered. The segment covering 582–592 (PVDDPWRRDSP) has biased composition (basic and acidic residues).

Belongs to the copine family. Interacts with nicotinic acetylcholine receptor. Ca(2+) serves as cofactor. In terms of tissue distribution, expressed in head and tail neurons, ventral cord moto-neurons, body wall muscles and hypodermal cells of the vulva.

It localises to the cell membrane. Exhibits calcium-dependent phospholipid binding properties. May function in membrane trafficking. Regulates synaptic levels of nicotinic acetylcholine receptor subunit lev-1 and unc-38 in the nerve cord. Involved in nicotinic acetylcholine receptor (nAChR)-mediated sensitivity to nicotine and levamisole. Affects directional sperm motility. The polypeptide is Nicotinic receptor-associated protein 1 (nra-1) (Caenorhabditis elegans).